Reading from the N-terminus, the 360-residue chain is C-C chemokine receptor type 2 (360 aa).

Over 1–42 (MLSTSRSRFIRNTNGSGEEVTTFFDYDYGAPCHKFDVKQIGA) the chain is Extracellular. N-linked (GlcNAc...) asparagine glycosylation is present at Asn14. Residue Tyr26 is modified to Sulfotyrosine. Residues 43-70 (QLLPPLYSLVFIFGFVGNMLVVLILINC) traverse the membrane as a helical segment. Residues 71–80 (KKLKSLTDIY) lie on the Cytoplasmic side of the membrane. The helical transmembrane segment at 81-100 (LLNLAISDLLFLITLPLWAH) threads the bilayer. The Extracellular segment spans residues 101 to 114 (SAANEWVFGNAMCK). Residues Cys113 and Cys190 are joined by a disulfide bond. The chain crosses the membrane as a helical span at residues 115–136 (LFTGLYHIGYLGGIFFIILLTI). At 137 to 153 (DRYLAIVHAVFALKART) the chain is on the cytoplasmic side. Position 139 is a phosphotyrosine; by JAK2 (Tyr139). The chain crosses the membrane as a helical span at residues 154–178 (VTFGVVTSVITWLVAVFASVPGIIF). Topologically, residues 179-206 (TKCQEEDSVYICGPYFPRGWNNFHTIMR) are extracellular. A helical membrane pass occupies residues 207-226 (NILGLVLPLLIMVICYSGIL). Residues 227 to 243 (KTLLRCRNEKKRHRAVR) lie on the Cytoplasmic side of the membrane. A helical transmembrane segment spans residues 244-268 (LIFTIMIVYFLFWTPYNIVILLNTF). Residues 269–285 (QEFFGLSNCESTRQLDQ) lie on the Extracellular side of the membrane. The chain crosses the membrane as a helical span at residues 286-309 (ATQVTETLGMTHCCINPIIYAFVG). Topologically, residues 310–360 (EKFRRYLSMFFRKYITKRFCKQCPVFYRETVDGVTSTNTPSTAEQEVSVGL) are cytoplasmic.

It belongs to the G-protein coupled receptor 1 family. As to quaternary structure, interacts with ARRB1. Interacts (via extracellular N-terminal region) with beta-defensin DEFB106A/DEFB106B; this interaction may preferentially require specific tyrosine sulfation on CCR2. Interacts with NUP85; the interaction is required for CCR2 clusters formation on the cell membrane and CCR2 signaling. N-glycosylated. Post-translationally, sulfation increases the affinity for both monomeric and dimeric CCL2 with stronger binding to the monomeric form. Binding of sulfated CCR2 to CCL2 promotes conversion of CCL2 from dimer to monomer.

Its subcellular location is the cell membrane. Key functional receptor for CCL2 but can also bind CCL7 and CCL12. Its binding with CCL2 on monocytes and macrophages mediates chemotaxis and migration induction through the activation of the PI3K cascade, the small G protein Rac and lamellipodium protrusion. Also acts as a receptor for the beta-defensin DEFB106A/DEFB106B. Regulates the expression of T-cell inflammatory cytokines and T-cell differentiation, promoting the differentiation of T-cells into T-helper 17 cells (Th17) during inflammation. Facilitates the export of mature thymocytes by enhancing directional movement of thymocytes to sphingosine-1-phosphate stimulation and up-regulation of S1P1R expression; signals through the JAK-STAT pathway to regulate FOXO1 activity leading to an increased expression of S1P1R. Plays an important role in mediating peripheral nerve injury-induced neuropathic pain. Increases NMDA-mediated synaptic transmission in both dopamine D1 and D2 receptor-containing neurons, which may be caused by MAPK/ERK-dependent phosphorylation of GRIN2B/NMDAR2B. Mediates the recruitment of macrophages and monocytes to the injury site following brain injury. The sequence is that of C-C chemokine receptor type 2 (CCR2) from Macaca mulatta (Rhesus macaque).